The primary structure comprises 276 residues: Eukaryotic translation initiation factor 3 subunit G (276 aa).

At S148 the chain carries Phosphoserine. An RRM domain is found at 195–274 (TTLKISQLNS…LILHLEWSKK (80 aa)).

This sequence belongs to the eIF-3 subunit G family. Component of the eukaryotic translation initiation factor 3 (eIF-3) complex.

The protein resides in the cytoplasm. Functionally, RNA-binding component of the eukaryotic translation initiation factor 3 (eIF-3) complex, which is involved in protein synthesis of a specialized repertoire of mRNAs and, together with other initiation factors, stimulates binding of mRNA and methionyl-tRNAi to the 40S ribosome. The eIF-3 complex specifically targets and initiates translation of a subset of mRNAs involved in cell proliferation. This subunit can bind 18S rRNA. This is Eukaryotic translation initiation factor 3 subunit G from Debaryomyces hansenii (strain ATCC 36239 / CBS 767 / BCRC 21394 / JCM 1990 / NBRC 0083 / IGC 2968) (Yeast).